The primary structure comprises 57 residues: Potassium channel toxin alpha-KTx 8.2 (57 aa).

An N-terminal signal peptide occupies residues 1–28; that stretch reads MSRLYAIILIALVFNVVMTITPDMKVEA. 3 disulfide bridges follow: Cys-31/Cys-47, Cys-34/Cys-52, and Cys-38/Cys-54.

Belongs to the short scorpion toxin superfamily. Potassium channel inhibitor family. Alpha-KTx 08 subfamily. As to expression, expressed by the venom gland.

It is found in the secreted. In terms of biological role, this toxin inhibits rKv1.1/KCNA1 (100% inhibition at 3 uM), Kv1.3/KCNA3 (human, mouse and rat) (IC(50)=269-467 nM), shaker IR (60% at 3 uM) and activates the mouse capsaicin receptor TRPV1 (EC(50)=132 uM, at 20 degrees Celsius), a non-selective cation channel expressed by sensory neurons of the pain pathway. In vivo, intraplantar injection of this toxin in WT mice hind paw shows significant acute pain, whereas no pain is observed when the toxin is injected into TRPV1 KO mice. In addition, subcutaneous injection into mice (185 mg) produces an excitation of the animal, but no lethality, whereas injection into cockroaches does not provoke lethality as well. The polypeptide is Potassium channel toxin alpha-KTx 8.2 (Olivierus martensii (Manchurian scorpion)).